Here is a 101-residue protein sequence, read N- to C-terminus: MELAVIGKSEFVTGFRLAGISKVYETPDIPATESAVRSVLEDKSVGILVMHNDDIGNLPEVLRKNLNESVQPTVVALGGSGSGSTSLREKIKQAVGVDLWK.

Belongs to the V-ATPase F subunit family. Has multiple subunits, A(3), B(3), C, D, E, F, G, I and K(x); there may be a few other subunits as well.

It is found in the cell membrane. Its function is as follows. Component of the A-type ATP synthase that produces ATP from ADP in the presence of a proton gradient across the membrane. The sequence is that of A-type ATP synthase subunit F from Methanosarcina mazei (strain ATCC BAA-159 / DSM 3647 / Goe1 / Go1 / JCM 11833 / OCM 88) (Methanosarcina frisia).